The following is a 456-amino-acid chain: MSEIVKIKALEVLDSRGNPTIQVEVHTISGAYGKALVPSGASTGSREALELRDESTKYKDNWYASKGVQKAVDNVNNKIADLLIGQNVLDQRNIDNIMIEADGTENKSKFGANAILGVSLAAAHAGANFLQIPLYRYIGGINANMLPLPMLNVINGGEHASNTIDFQEFMIMPMGAKTFKESLQMANKVFHNLAKLLKKAGHGTQVGDEGGFAPNLKNHEEVLDFLMQAIEVAGFVASTSKEKGIAIAIDAASSELYDQSTGKYTFKKLKQAIKTKQPGFENVEKTKLDFTSDELIAYYGELISKYPIISIEDGFAESDWQGFAKFTKIYGEKLQIVGDDLTVTNSKILERAIKEKSMNSILVKLNQIGSLSETLDTINMAHKAGFSAVISHRSGETEDTTIADLAVALNTGQIKTGSLSRTDRIAKYNRLLEIEDQLEEAAVFPGKKAFWNLKNR.

Residue Q167 participates in (2R)-2-phosphoglycerate binding. E209 functions as the Proton donor in the catalytic mechanism. Residues D250, E312, and D339 each coordinate Mg(2+). (2R)-2-phosphoglycerate is bound by residues K364, R393, S394, and K415. K364 functions as the Proton acceptor in the catalytic mechanism.

The protein belongs to the enolase family. The cofactor is Mg(2+).

It localises to the cytoplasm. Its subcellular location is the secreted. The protein resides in the cell surface. The enzyme catalyses (2R)-2-phosphoglycerate = phosphoenolpyruvate + H2O. It participates in carbohydrate degradation; glycolysis; pyruvate from D-glyceraldehyde 3-phosphate: step 4/5. Catalyzes the reversible conversion of 2-phosphoglycerate (2-PG) into phosphoenolpyruvate (PEP). It is essential for the degradation of carbohydrates via glycolysis. The protein is Enolase of Mycoplasmopsis pulmonis (strain UAB CTIP) (Mycoplasma pulmonis).